The following is a 47-amino-acid chain: PhoP/PhoQ regulator MgrB (47 aa).

A helical membrane pass occupies residues 6-26 (WVVLGIVVVVCLLLWAQVFNI).

It belongs to the MgrB family. May form homooligomers. Probably interacts with the periplasmic domain of PhoQ.

Its subcellular location is the cell inner membrane. Its function is as follows. PhoP-regulated transcription is redox-sensitive, being activated when the periplasm becomes more reducing. MgrB acts between DsbA/DsbB and PhoP/PhoQ in this pathway. Represses PhoP/PhoQ signaling, possibly by binding to the periplasmic domain of PhoQ, altering its activity and that of downstream effector PhoP. In Salmonella agona (strain SL483), this protein is PhoP/PhoQ regulator MgrB.